We begin with the raw amino-acid sequence, 608 residues long: V-type ATP synthase subunit I (608 aa).

Helical transmembrane passes span 308–325 (ISFI…MIIG), 327–346 (AAYG…SFLL), 356–376 (GLIF…GTWF), 405–425 (IIFI…VWNF), 438–458 (IAQI…LNLI), 464–484 (FPMY…VFVF), 495–515 (CILK…SGFA), 517–537 (IISY…SASF), and 550–570 (IGLI…NIML).

It belongs to the V-ATPase 116 kDa subunit family.

It is found in the cell membrane. Its function is as follows. Produces ATP from ADP in the presence of a proton gradient across the membrane. This chain is V-type ATP synthase subunit I (atpI), found in Borreliella burgdorferi (strain ATCC 35210 / DSM 4680 / CIP 102532 / B31) (Borrelia burgdorferi).